Reading from the N-terminus, the 887-residue chain is Multiple RNA-binding domain-containing protein 1 (887 aa).

An RRM 1 domain is found at 2–94 (SRIIVKGLPV…SKIEVSMAKS (93 aa)). Disordered regions lie at residues 121–143 (KLLQ…NIDD), 203–276 (KEEN…RNLA), and 297–336 (SEAE…DEEL). Residues Ser-220 and Ser-264 each carry the phosphoserine modification. Over residues 264–276 (SDEKENEKRRNLA) the composition is skewed to basic and acidic residues. The segment covering 306-315 (SSYATEQNES) has biased composition (polar residues). Positions 316–325 (LDTKKEEQPE) are enriched in basic and acidic residues. RRM domains follow at residues 345 to 423 (GRLF…PGEE), 532 to 604 (KVIL…RGPK), 663 to 746 (VSIF…LSHR), and 763 to 840 (GKII…YAEE). A disordered region spans residues 864–887 (EMAALRNGGGRKKLDVDDEENEGF).

Belongs to the RRM MRD1 family. As to quaternary structure, interacts with NOP1. Binds to the 35S pre-rRNA and the U3 snoRNA.

It is found in the nucleus. Involved in pre-rRNA processing. Required for maintaining steady-state levels of 40S ribosomal subunit. Required for the initial processing of pre-rRNA at the A0 to A2 sites, leading to the processing of the 23S pre-rRNA intermediate to the 18S rRNA. In Saccharomyces cerevisiae (strain ATCC 204508 / S288c) (Baker's yeast), this protein is Multiple RNA-binding domain-containing protein 1 (MRD1).